A 409-amino-acid chain; its full sequence is Lissencephaly-1 homolog (409 aa).

The 33-residue stretch at 7–39 (QEEELRFAVADYLQSCGYTNALEAFKKDASIPK) folds into the LisH domain. A coiled-coil region spans residues 56-81 (SVVRLQKKVMDLELRLNNTTREMNSG). Over residues 75 to 92 (TREMNSGVPTRNSRSSND) the composition is skewed to polar residues. The tract at residues 75–105 (TREMNSGVPTRNSRSSNDWIPRPPEKHSLSG) is disordered. WD repeat units follow at residues 105 to 146 (GHRS…RTLR), 147 to 186 (GHTD…CRMT), 189 to 228 (GHDH…CVYN), 231 to 270 (GHRE…CKEE), 273 to 332 (GHEH…CLFS), 335 to 374 (GHDN…CSKS), and 377 to 409 (AHNH…WECR).

The protein belongs to the WD repeat LIS1/nudF family.

Its subcellular location is the cytoplasm. It is found in the cytoskeleton. The protein localises to the microtubule organizing center. It localises to the centrosome. In terms of biological role, positively regulates the activity of the minus-end directed microtubule motor protein dynein. May enhance dynein-mediated microtubule sliding by targeting dynein to the microtubule plus end. Required for several dynein- and microtubule-dependent processes. In Trichoplax adhaerens (Trichoplax reptans), this protein is Lissencephaly-1 homolog.